Reading from the N-terminus, the 439-residue chain is 26S rRNA (cytosine-C(5))-methyltransferase nsun-5 (439 aa).

Residues Asp266, Asp293, and Asp313 each coordinate S-adenosyl-L-methionine. The Nucleophile role is filled by Cys366.

This sequence belongs to the class I-like SAM-binding methyltransferase superfamily. RsmB/NOP family.

The catalysed reaction is a cytidine in 26S rRNA + S-adenosyl-L-methionine = a 5-methylcytidine in 26S rRNA + S-adenosyl-L-homocysteine + H(+). Functionally, S-adenosyl-L-methionine-dependent methyltransferase which methylates the carbon-5 position of cytosine 2381 to 5-methylcytosine (m5C2381) in 26S rRNA. Plays a role in the production of mature 5S, 5.8S, 18S and 26S rRNAs and promotes the processing of the internally transcribed spacer 2 (ITS2), which separates the 5.8S and 26S rRNAs on large pre-rRNA precursors. May play a role in the translation of leucine and proline codons. May play a role in maintaining ribosomal frameshifting in response to osmotic stress. Not required for global translation. The sequence is that of 26S rRNA (cytosine-C(5))-methyltransferase nsun-5 from Caenorhabditis elegans.